The primary structure comprises 495 residues: Cobyric acid synthase (495 aa).

Positions 252 to 439 (RIRIAAPMLS…VHGLFAQDAF (188 aa)) constitute a GATase cobBQ-type domain. Cys-334 serves as the catalytic Nucleophile. The active site involves His-431.

Belongs to the CobB/CobQ family. CobQ subfamily.

The protein operates within cofactor biosynthesis; adenosylcobalamin biosynthesis. Catalyzes amidations at positions B, D, E, and G on adenosylcobyrinic A,C-diamide. NH(2) groups are provided by glutamine, and one molecule of ATP is hydrogenolyzed for each amidation. This chain is Cobyric acid synthase, found in Hyphomonas neptunium (strain ATCC 15444).